We begin with the raw amino-acid sequence, 293 residues long: Histamine N-methyltransferase (293 aa).

Glu28 provides a ligand contact to substrate. S-adenosyl-L-methionine-binding residues include Gly60, Glu89, Gln94, Ser120, and Ile142. Asn283 contributes to the substrate binding site.

Belongs to the class I-like SAM-binding methyltransferase superfamily. HNMT family. In terms of assembly, monomer.

The protein resides in the cytoplasm. It carries out the reaction histamine + S-adenosyl-L-methionine = N(tau)-methylhistamine + S-adenosyl-L-homocysteine + H(+). In terms of biological role, inactivates histamine by N-methylation. Plays an important role in degrading histamine and in regulating the airway response to histamine. The protein is Histamine N-methyltransferase (hnmt) of Xenopus tropicalis (Western clawed frog).